The chain runs to 373 residues: tRNA-specific 2-thiouridylase MnmA (373 aa).

Residues 12–19 (GMSGGVDS) and methionine 38 each bind ATP. Residues 98-100 (NPD) are interaction with target base in tRNA. Cysteine 103 serves as the catalytic Nucleophile. Cysteines 103 and 200 form a disulfide. Glycine 128 contacts ATP. The interaction with tRNA stretch occupies residues 150–152 (KDQ). Cysteine 200 acts as the Cysteine persulfide intermediate in catalysis. Positions 312–313 (RY) are interaction with tRNA.

This sequence belongs to the MnmA/TRMU family. As to quaternary structure, interacts with TusE.

It localises to the cytoplasm. It carries out the reaction S-sulfanyl-L-cysteinyl-[protein] + uridine(34) in tRNA + AH2 + ATP = 2-thiouridine(34) in tRNA + L-cysteinyl-[protein] + A + AMP + diphosphate + H(+). Catalyzes the 2-thiolation of uridine at the wobble position (U34) of tRNA(Lys), tRNA(Glu) and tRNA(Gln), leading to the formation of s(2)U34, the first step of tRNA-mnm(5)s(2)U34 synthesis. Sulfur is provided by IscS, via a sulfur-relay system. Binds ATP and its substrate tRNAs. The sequence is that of tRNA-specific 2-thiouridylase MnmA from Yersinia enterocolitica serotype O:8 / biotype 1B (strain NCTC 13174 / 8081).